The chain runs to 167 residues: Large ribosomal subunit protein bL9 (167 aa).

The protein belongs to the bacterial ribosomal protein bL9 family.

Its function is as follows. Binds to the 23S rRNA. The protein is Large ribosomal subunit protein bL9 of Nitratidesulfovibrio vulgaris (strain DSM 19637 / Miyazaki F) (Desulfovibrio vulgaris).